We begin with the raw amino-acid sequence, 779 residues long: Protocadherin beta-8 (779 aa).

An N-terminal signal peptide occupies residues 1-28 (METALTKTPEKRQVIFLAILLLLWEASS). Residues 29-690 (EAISYSMPEE…QEEDMLTLYL (662 aa)) are Extracellular-facing. 5 Cadherin domains span residues 75-133 (LQLD…FPEF), 134-242 (PDTE…APQF), 243-346 (LQSL…APKL), 347-450 (TISS…APAF), and 451-560 (TQTS…APFV). A disulfide bridge connects residues C96 and C102. N169 carries an N-linked (GlcNAc...) asparagine glycan. S223 carries O-linked (Man) serine glycosylation. O-linked (Man) threonine glycosylation is found at T225 and T227. The N-linked (GlcNAc...) asparagine glycan is linked to N417. N-linked (GlcNAc...) asparagine glycosylation is present at N566. The Cadherin 6 domain maps to 575 to 675 (LPRAAEPGYL…SQPYLPLPEV (101 aa)). Residues 691 to 711 (VIALASVSSLFLLSVLLFVGV) form a helical membrane-spanning segment. The Cytoplasmic portion of the chain corresponds to 712 to 779 (KLCKKAREAS…IIPSSLLQDS (68 aa)).

As to quaternary structure, forms homodimers in trans (molecules expressed by two different cells). Forms promiscuous heterodimers in cis (at the plasma membrane of the same cell) with other protocadherins.

It is found in the cell membrane. In terms of biological role, calcium-dependent cell-adhesion protein involved in cells self-recognition and non-self discrimination. Thereby, it is involved in the establishment and maintenance of specific neuronal connections in the brain. This chain is Protocadherin beta-8, found in Mus musculus (Mouse).